The chain runs to 103 residues: Large ribosomal subunit protein eL43 (103 aa).

The protein belongs to the eukaryotic ribosomal protein eL43 family.

The protein is Large ribosomal subunit protein eL43 (RPL37A) of Tetrahymena thermophila (strain SB210).